A 153-amino-acid chain; its full sequence is Transcriptional repressor NrdR (153 aa).

Residues Cys3 to Cys34 fold into a zinc finger. The ATP-cone domain maps to Val49–Asp139.

It belongs to the NrdR family. It depends on Zn(2+) as a cofactor.

Negatively regulates transcription of bacterial ribonucleotide reductase nrd genes and operons by binding to NrdR-boxes. This Erythrobacter litoralis (strain HTCC2594) protein is Transcriptional repressor NrdR.